Here is a 209-residue protein sequence, read N- to C-terminus: Ras-like protein (209 aa).

A GTP-binding site is contributed by 15-22 (GGGGEGKS). The Effector region signature appears at 37-45 (YDPTIEESY). Residues 62-66 (DTAGQ) and 121-124 (NKCD) each bind GTP. S-palmitoyl cysteine attachment occurs at residues C202 and C203. The residue at position 206 (C206) is a Cysteine methyl ester. The S-geranylgeranyl cysteine moiety is linked to residue C206. Residues 207–209 (IVM) constitute a propeptide, removed in mature form.

This sequence belongs to the small GTPase superfamily. Ras family.

The protein localises to the cell membrane. It catalyses the reaction GTP + H2O = GDP + phosphate + H(+). With respect to regulation, alternates between an inactive form bound to GDP and an active form bound to GTP. Activated by a guanine nucleotide-exchange factor (GEF) and inactivated by a GTPase-activating protein (GAP). In Laccaria bicolor (Bicoloured deceiver), this protein is Ras-like protein.